We begin with the raw amino-acid sequence, 465 residues long: Cysteine--tRNA ligase (465 aa).

Residue Cys30 participates in Zn(2+) binding. Residues 32-42 carry the 'HIGH' region motif; the sequence is ITVYDYCHIGH. Zn(2+) contacts are provided by Cys214, His239, and Glu243. The 'KMSKS' region motif lies at 271 to 275; sequence KMSKS. Lys274 is a binding site for ATP.

This sequence belongs to the class-I aminoacyl-tRNA synthetase family. As to quaternary structure, monomer. It depends on Zn(2+) as a cofactor.

It localises to the cytoplasm. It catalyses the reaction tRNA(Cys) + L-cysteine + ATP = L-cysteinyl-tRNA(Cys) + AMP + diphosphate. In Burkholderia mallei (strain NCTC 10229), this protein is Cysteine--tRNA ligase.